The chain runs to 2327 residues: Voltage-dependent N-type calcium channel subunit alpha-1B (2327 aa).

The tract at residues 1–37 is disordered; the sequence is MVRFGDELGGRYGGTGGGERARGGGAGGAGGPGQGGL. The Cytoplasmic segment spans residues 1–90; the sequence is MVRFGDELGG…DNVVRKYAKR (90 aa). The segment covering 10 to 37 has biased composition (gly residues); sequence GRYGGTGGGERARGGGAGGAGGPGQGGL. The residue at position 22 (Arg-22) is an Omega-N-methylarginine. One copy of the I repeat lies at 82-359; sequence NVVRKYAKRI…LVLGVLSGEF (278 aa). The chain crosses the membrane as a helical span at residues 91–114; that stretch reads ITEWPPFEYMILATIIANCIVLAL. The Extracellular segment spans residues 115 to 131; it reads EQHLPDGDKTPMSERLD. Residues 132–152 form a helical membrane-spanning segment; the sequence is DTEPYFIGIFCFEAGIKIIAL. Topologically, residues 153–163 are cytoplasmic; the sequence is GFVFHKGSYLR. Residues 164–182 traverse the membrane as a helical segment; sequence NGWNVMDFVVVLTGILATA. Over 183–187 the chain is Extracellular; the sequence is GTDFD. A helical membrane pass occupies residues 188-211; it reads LRTLRAVRVLRPLKLVSGIPSLQV. Over 212-221 the chain is Cytoplasmic; it reads VLKSIMKAMV. The chain crosses the membrane as a helical span at residues 222 to 244; sequence PLLQIGLLLFFAILMFAIIGLEF. The Extracellular portion of the chain corresponds to 245–331; sequence YMGKFHKACF…NTNDAAGNTW (87 aa). N-linked (GlcNAc...) asparagine glycosylation occurs at Asn-256. The helical transmembrane segment at 332–356 threads the bilayer; it reads NWLYFIPLIIIGSFFMLNLVLGVLS. Residues 357–482 are Cytoplasmic-facing; it reads GEFAKERERV…FFIRRMVKAQ (126 aa). Positions 379 to 396 are binding to the beta subunit; it reads QQIERELNGYLEWIFKAE. Ser-411 is subject to Phosphoserine. Position 451-458 (451-458) interacts with ATP; that stretch reads ASLKSGKT. Residues 468 to 712 form an II repeat; it reads EKMFRFFIRR…VFLAIAVDNL (245 aa). The chain crosses the membrane as a helical span at residues 483–501; the sequence is SFYWVVLCVVALNTLCVAM. Topologically, residues 502 to 511 are extracellular; sequence VHYNQPQRLT. A helical transmembrane segment spans residues 512–534; it reads TALYFAEFVFLGLFLTEMSLKMY. At 535 to 544 the chain is on the cytoplasmic side; the sequence is GLGPRSYFRS. Ser-544 lines the a 1,2-diacyl-sn-glycero-3-phospho-(1D-myo-inositol-4,5-bisphosphate) pocket. The chain crosses the membrane as a helical span at residues 545–566; it reads SFNCFDFGVIVGSIFEVVWAAI. Residues 567 to 573 are Extracellular-facing; the sequence is KPGTSFG. A helical transmembrane segment spans residues 574-586; the sequence is ISVLRALRLLRIF. A 1,2-diacyl-sn-glycero-3-phospho-(1D-myo-inositol-4,5-bisphosphate) contacts are provided by Arg-584 and Lys-587. The Cytoplasmic segment spans residues 587–604; it reads KVTKYWNSLRNLVVSLLN. The chain crosses the membrane as a helical span at residues 605–630; the sequence is SMKSIISLLFLLFLFIVVFALLGMQL. Residues 631 to 682 lie on the Extracellular side of the membrane; it reads FGGQFNFQDETPTTNFDTFPAAILTVFQILTGEDWNAVMYHGIESQGGVSKG. A helical membrane pass occupies residues 683-709; the sequence is MFSSFYFIVLTLFGNYTLLNVFLAIAV. Over 710–1140 the chain is Cytoplasmic; that stretch reads DNLANAQELT…FCHYIVTMRY (431 aa). Ser-745, Ser-748, and Ser-783 each carry phosphoserine. 2 disordered regions span residues 802 to 1015 and 1042 to 1066; these read TRHV…KEPH and EQPEDADNQRNVTRMGSQPSDPSTT. Basic and acidic residues-rich tracts occupy residues 805–826, 869–885, 914–924, 961–972, and 988–1015; these read VRPDMKTHMDRPLVVEPGRDGL, EQDRTESTETGAREERA, GSPEEATEREP, GPREAENNEEPT, and PEREAAEKESNAVEGDKETRNHQPKEPH. Polar residues predominate over residues 1050 to 1066; that stretch reads QRNVTRMGSQPSDPSTT. Ser-1058 carries the post-translational modification Phosphoserine. One copy of the III repeat lies at 1126-1412; that stretch reads NLLRRFCHYI…IFVALIIITF (287 aa). The helical transmembrane segment at 1141–1159 threads the bilayer; the sequence is FEMVILVVIALSSIALAAE. At 1160-1167 the chain is on the extracellular side; the sequence is DPVRTDSF. The helical transmembrane segment at 1168-1192 threads the bilayer; sequence RNNALKYMDYIFTGVFTFEMVIKMI. Topologically, residues 1193 to 1206 are cytoplasmic; the sequence is DLGLLLHPGAYFRD. A helical transmembrane segment spans residues 1207–1231; sequence LWNILDFIVVSGALVAFAFSSFMGG. At 1232-1237 the chain is on the extracellular side; the sequence is SKGKDI. The helical transmembrane segment at 1238-1258 threads the bilayer; that stretch reads NTIKSLRVLRVLRPLKTIKRL. The Cytoplasmic segment spans residues 1259–1276; sequence PKLKAVFDCVVNSLKNVL. A helical membrane pass occupies residues 1277-1296; that stretch reads NILIVYMLFMFIFAVIAVQL. At 1297 to 1383 the chain is on the extracellular side; it reads FKGKFFYCTD…EQGPSPGFRM (87 aa). A helical membrane pass occupies residues 1384-1409; that stretch reads ELSIFYVVYFVVFPFFFVNIFVALII. The Cytoplasmic portion of the chain corresponds to 1410–1464; sequence ITFQEQGDKVMSECSLEKNERACIDFAISAKPLTRYMPQNKQSFQYKTWTFVVSP. Residues 1449-1702 form an IV repeat; it reads NKQSFQYKTW…LFVAVIMDNF (254 aa). Residues 1465–1483 form a helical membrane-spanning segment; that stretch reads PFEYFIMAMIALNTVVLMM. At 1484 to 1491 the chain is on the extracellular side; sequence KFYDAPYE. A helical membrane pass occupies residues 1492–1516; sequence YELMLKCLNIVFTSMFSMECILKII. Topologically, residues 1517–1526 are cytoplasmic; that stretch reads AFGVLNYFRD. A helical membrane pass occupies residues 1527–1548; that stretch reads AWNVFDFVTVLGSITDILVTEI. Over 1549–1554 the chain is Extracellular; sequence ANNFIN. Asn-1554 carries an N-linked (GlcNAc...) asparagine glycan. Residues 1555-1573 form a helical membrane-spanning segment; that stretch reads LSFLRLFRAARLIKLLRQG. Over 1574–1592 the chain is Cytoplasmic; it reads YTIRILLWTFVQSFKALPY. A helical membrane pass occupies residues 1593-1612; sequence VCLLIAMLFFIYAIIGMQVF. Residues 1613–1674 lie on the Extracellular side of the membrane; sequence GNIALDDDTS…ANASECGSDF (62 aa). The N-linked (GlcNAc...) asparagine glycan is linked to Asn-1666. A helical transmembrane segment spans residues 1675–1698; it reads AYFYFVSFIFLCSFLMLNLFVAVI. The Cytoplasmic segment spans residues 1699 to 2327; it reads MDNFEYLTRD…YHHPDQDHWC (629 aa). Residues 1715 to 1750 form the EF-hand domain; it reads HHLDEFIRVWAEYDPAACGRISYNDMFEMLKHMSPP. 3 residues coordinate Ca(2+): Asp-1728, Arg-1734, and Asp-1739. Residues 1972–2193 are disordered; it reads TLRGPDGEPQ…TPRPSITYKT (222 aa). Residues 2039–2053 show a composition bias toward basic residues; that stretch reads SHHHHHRCHRRRDKK. Ser-2056 carries the phosphoserine modification. The span at 2088–2104 shows a compositional bias: basic and acidic residues; that stretch reads CRRDRKQERGRSQERRQ. Composition is skewed to polar residues over residues 2131–2141 and 2152–2168; these read PSLSSHPTSPT and GSGSVNGSPLMSTSGAS. Phosphoserine occurs at positions 2212, 2221, and 2244. 2 disordered regions span residues 2230-2249 and 2273-2292; these read EPLSQPLAPGSRIGSDPYLG and ATNSGRSSRTSYVSSLTSQS. Low complexity predominate over residues 2276-2292; sequence SGRSSRTSYVSSLTSQS.

It belongs to the calcium channel alpha-1 subunit (TC 1.A.1.11) family. CACNA1B subfamily. As to quaternary structure, multisubunit complex consisting of alpha-1, alpha-2, beta and delta subunits in a 1:1:1:1 ratio. The channel activity is directed by the pore-forming and voltage-sensitive alpha-1 subunit. In many cases, this subunit is sufficient to generate voltage-sensitive calcium channel activity. The auxiliary subunits beta and alpha-2/delta linked by a disulfide bridge regulate the channel activity. Interacts with RIMS1. Interacts with FMR1 (via C-terminus); this interaction induces a decrease in the number of presynaptic functional CACNA1B channels at the cell surface. Post-translationally, phosphorylated in vitro by CaM-kinase II, PKA, PKC and CGPK. In terms of tissue distribution, widespread expression throughout the brain. Highest levels in pyramidal cell layers C1, C2 and C3 of the hippocampus, in the dentate gyrus, in the cortex layers 2 et 4, in the subiculum and the habenula.

It localises to the membrane. It catalyses the reaction Ca(2+)(in) = Ca(2+)(out). Its activity is regulated as follows. Is specifically blocked by omega-conotoxin GVIA. Is specifically blocked by omega-conotoxin MVIIA (ziconotide). Is insensitive to dihydropyridines (DHP). Voltage-sensitive calcium channels (VSCC) mediate the entry of calcium ions into excitable cells and are also involved in a variety of calcium-dependent processes, including muscle contraction, hormone or neurotransmitter release, gene expression, cell motility, cell division and cell death. This alpha-1B subunit gives rise to N-type calcium currents. N-type calcium channels belong to the 'high-voltage activated' (HVA) group. They are involved in pain signaling. Calcium channels containing alpha-1B subunit may play a role in directed migration of immature neurons. Mediates Ca(2+) release probability at hippocampal neuronal soma and synaptic terminals. This Mus musculus (Mouse) protein is Voltage-dependent N-type calcium channel subunit alpha-1B (Cacna1b).